The sequence spans 79 residues: Alpha-elapitoxin-Aa2e (79 aa).

5 disulfides stabilise this stretch: cysteine 3–cysteine 20, cysteine 13–cysteine 41, cysteine 26–cysteine 30, cysteine 45–cysteine 56, and cysteine 57–cysteine 62.

Belongs to the three-finger toxin family. Long-chain subfamily. Type II alpha-neurotoxin sub-subfamily. In terms of tissue distribution, expressed by the venom gland.

It is found in the secreted. Binds with high affinity to muscular (alpha-1/CHRNA1) and neuronal (alpha-7/CHRNA7) nicotinic acetylcholine receptor (nAChR) and inhibits acetylcholine from binding to the receptor, thereby impairing neuromuscular and neuronal transmission. Produces paralysis, clear dyspnea and lethality on mice. The polypeptide is Alpha-elapitoxin-Aa2e (Acanthophis antarcticus (Common death adder)).